A 307-amino-acid chain; its full sequence is Methionyl-tRNA formyltransferase (307 aa).

109 to 112 (SMLP) serves as a coordination point for (6S)-5,6,7,8-tetrahydrofolate.

It belongs to the Fmt family.

It carries out the reaction L-methionyl-tRNA(fMet) + (6R)-10-formyltetrahydrofolate = N-formyl-L-methionyl-tRNA(fMet) + (6S)-5,6,7,8-tetrahydrofolate + H(+). Functionally, attaches a formyl group to the free amino group of methionyl-tRNA(fMet). The formyl group appears to play a dual role in the initiator identity of N-formylmethionyl-tRNA by promoting its recognition by IF2 and preventing the misappropriation of this tRNA by the elongation apparatus. The sequence is that of Methionyl-tRNA formyltransferase from Orientia tsutsugamushi (strain Boryong) (Rickettsia tsutsugamushi).